The sequence spans 984 residues: Protein translocase subunit SecA (984 aa).

ATP contacts are provided by residues Q96, G114 to T118, and D595. Basic and acidic residues-rich tracts occupy residues E930 to E942 and K952 to L971. The tract at residues E930–E984 is disordered. Residues R972–E984 show a composition bias toward basic residues.

Belongs to the SecA family. Monomer and homodimer. Part of the essential Sec protein translocation apparatus which comprises SecA, SecYEG and auxiliary proteins SecDF. Other proteins may also be involved.

The protein localises to the cell inner membrane. It is found in the cytoplasm. The enzyme catalyses ATP + H2O + cellular proteinSide 1 = ADP + phosphate + cellular proteinSide 2.. Its function is as follows. Part of the Sec protein translocase complex. Interacts with the SecYEG preprotein conducting channel. Has a central role in coupling the hydrolysis of ATP to the transfer of proteins into and across the cell membrane, serving as an ATP-driven molecular motor driving the stepwise translocation of polypeptide chains across the membrane. The chain is Protein translocase subunit SecA from Aquifex aeolicus (strain VF5).